The primary structure comprises 882 residues: Homeobox-leucine zipper protein ROC3 (882 aa).

Positions 104 to 144 (DVDDDHKPQHSGHDQPPDAAQPSGAAGGNAKKKRYHRHTAH) are disordered. Over residues 107-119 (DDHKPQHSGHDQP) the composition is skewed to basic and acidic residues. A compositionally biased stretch (basic residues) spans 133 to 143 (AKKKRYHRHTA). The homeobox DNA-binding region spans 134-193 (KKKRYHRHTAHQIQQMEALFKECPHPDDKQRLKLSQELGLKPRQVKFWFQNRRTQMKAQQ). Residues 200–263 (ILRAENENLK…LDRLACIATR (64 aa)) are a coiled coil. In terms of domain architecture, START spans 340 to 584 (QEQDKQLVVD…LQRQCERLAS (245 aa)). Residues 782–816 (AAAPTISSSTTTTTGNGNGETSSTPPRNSSSNNNN) show a composition bias toward low complexity. The interval 782-820 (AAAPTISSSTTTTTGNGNGETSSTPPRNSSSNNNNADEL) is disordered.

Belongs to the HD-ZIP homeobox family. Class IV subfamily.

The protein resides in the nucleus. Probable transcription factor. In Oryza sativa subsp. japonica (Rice), this protein is Homeobox-leucine zipper protein ROC3 (ROC3).